A 769-amino-acid chain; its full sequence is Polyribonucleotide nucleotidyltransferase (769 aa).

Aspartate 490 and aspartate 496 together coordinate Mg(2+). The KH domain maps to 557–616; it reads PKIDTIMIPVDKIKVVIGKGGEQIDKIIAETGVKIDIDDEGLCSIFSSDQSAIDRAKEII. Positions 626–694 constitute an S1 motif domain; sequence GEVYEAKVVR…DKGRVDASMR (69 aa). Over residues 700-734 the composition is skewed to basic and acidic residues; the sequence is PEGYVEPERKPRERRDNKDRRNGNGFDRRNNDRNN. Positions 700-769 are disordered; it reads PEGYVEPERK…FPELSTKKPE (70 aa). A compositionally biased stretch (low complexity) spans 736–746; sequence NNHNNNSGNHS. Over residues 747 to 769 the composition is skewed to basic and acidic residues; that stretch reads FELRERKSHVDHEFPELSTKKPE.

It belongs to the polyribonucleotide nucleotidyltransferase family. The cofactor is Mg(2+).

It localises to the cytoplasm. It carries out the reaction RNA(n+1) + phosphate = RNA(n) + a ribonucleoside 5'-diphosphate. In terms of biological role, involved in mRNA degradation. Catalyzes the phosphorolysis of single-stranded polyribonucleotides processively in the 3'- to 5'-direction. This is Polyribonucleotide nucleotidyltransferase from Lactococcus lactis subsp. cremoris (strain SK11).